Here is a 246-residue protein sequence, read N- to C-terminus: Probable transcriptional regulatory protein Dole_0371 (246 aa).

Belongs to the TACO1 family.

Its subcellular location is the cytoplasm. The chain is Probable transcriptional regulatory protein Dole_0371 from Desulfosudis oleivorans (strain DSM 6200 / JCM 39069 / Hxd3) (Desulfococcus oleovorans).